Consider the following 259-residue polypeptide: Imidazole glycerol phosphate synthase subunit HisF (259 aa).

Catalysis depends on residues Asp11 and Asp130.

The protein belongs to the HisA/HisF family. In terms of assembly, heterodimer of HisH and HisF.

It is found in the cytoplasm. It catalyses the reaction 5-[(5-phospho-1-deoxy-D-ribulos-1-ylimino)methylamino]-1-(5-phospho-beta-D-ribosyl)imidazole-4-carboxamide + L-glutamine = D-erythro-1-(imidazol-4-yl)glycerol 3-phosphate + 5-amino-1-(5-phospho-beta-D-ribosyl)imidazole-4-carboxamide + L-glutamate + H(+). The protein operates within amino-acid biosynthesis; L-histidine biosynthesis; L-histidine from 5-phospho-alpha-D-ribose 1-diphosphate: step 5/9. IGPS catalyzes the conversion of PRFAR and glutamine to IGP, AICAR and glutamate. The HisF subunit catalyzes the cyclization activity that produces IGP and AICAR from PRFAR using the ammonia provided by the HisH subunit. The polypeptide is Imidazole glycerol phosphate synthase subunit HisF (Desulfosudis oleivorans (strain DSM 6200 / JCM 39069 / Hxd3) (Desulfococcus oleovorans)).